The following is a 732-amino-acid chain: Formin-homology and zinc finger domains protein 1 (732 aa).

Composition is skewed to low complexity over residues 1-12, 19-45, 121-137, and 240-251; these read MMLASSAPTAPS, QPSA…SDAS, QQQQ…QSSS, and SSPKSPTSPTQP. The first 27 residues, 1–27, serve as a signal peptide directing secretion; it reads MMLASSAPTAPSLLPPSSQPSAATTRA. Disordered regions lie at residues 1–45, 121–141, and 232–267; these read MMLA…SDAS, QQQQ…SDRK, and RGRP…RRNT. A compositionally biased stretch (polar residues) spans 256-267; sequence SQASSLPSRRNT. Positions 355 to 732 constitute an FH2 domain; the sequence is PISLSSSIIP…DDHHINVSSP (378 aa).

Belongs to the formin homology family. As to expression, transiently expressed in all mesoderm derived progenitor body wall muscle cells before they differentiate.

In terms of biological role, acts redundantly with hlh-1 to promote body wall muscle cell and coelomocyte specification in postembryonic mesoderm progenitors, probably through suppression of sem-2. The protein is Formin-homology and zinc finger domains protein 1 of Caenorhabditis elegans.